Consider the following 452-residue polypeptide: Heat shock protein 83 (452 aa).

Arginine 124 is an ATP binding site. A TPR repeat-binding motif is present at residues 448-452 (MEQVD).

The protein belongs to the heat shock protein 90 family. In terms of assembly, homodimer.

The protein localises to the cytoplasm. Functionally, molecular chaperone that promotes the maturation, structural maintenance and proper regulation of specific target proteins involved for instance in cell cycle control and signal transduction. Undergoes a functional cycle that is linked to its ATPase activity. This cycle probably induces conformational changes in the client proteins, thereby causing their activation. Interacts dynamically with various co-chaperones that modulate its substrate recognition, ATPase cycle and chaperone function. The polypeptide is Heat shock protein 83 (HSP83) (Leishmania donovani).